We begin with the raw amino-acid sequence, 706 residues long: Melanopsin (706 aa).

Residues 1–86 (MTEIPSFQPP…VWDIPPLAHY (86 aa)) lie on the Extracellular side of the membrane. N-linked (GlcNAc...) asparagine glycans are attached at residues Asn-12, Asn-64, and Asn-69. A helical membrane pass occupies residues 87 to 107 (IVGTAVFCIGCCGMFGNAVVV). Over 108-121 (YSFIKSKGLRTPAN) the chain is Cytoplasmic. A helical membrane pass occupies residues 122–142 (FFIINLALSDFLMNLTNMPIF). At 143–159 (AVNSAFQRWLLSDFACE) the chain is on the extracellular side. A disulfide bridge connects residues Cys-158 and Cys-236. A helical membrane pass occupies residues 160-180 (LYGFAGGLFGCLSINTLMAIS). Over 181 to 201 (MDRYLVITKPFLVMRIVTKQR) the chain is Cytoplasmic. A helical transmembrane segment spans residues 202–222 (VMFAILLLWIWSLVWALPPLF). Residues 223–248 (GWSAYVSEGFGTSCTFDYMTPKLSYH) are Extracellular-facing. Residues 249–269 (IFTYIIFFTMYFIPGGVMIYC) traverse the membrane as a helical segment. Residues 270-314 (YYNIFATVKSGDKQFGKAVKEMAHEDVKNKAQQERQRKNEIKTAK) lie on the Cytoplasmic side of the membrane. A helical membrane pass occupies residues 315–335 (IAFIVISLFMSAWTPYAVVSA). At 336–351 (LGTLGYQDLVTPYLQS) the chain is on the extracellular side. The chain crosses the membrane as a helical span at residues 352–372 (IPAMFAKSSAVYSPIVYAITY). Lys-358 carries the N6-(retinylidene)lysine modification. Residues 373–706 (PKFREAVKKH…LSEAHDETVL (334 aa)) are Cytoplasmic-facing. 3 disordered regions span residues 393-446 (SEEE…RQDT), 571-599 (RTESGYDRSQDSQRKKVVGDTHRSRSFNT), and 630-658 (QSSEKHEYDNPAFDEGITEVDTDSENETE). 2 stretches are compositionally biased toward low complexity: residues 404–418 (QSSASASMSMTQTTA) and 426–442 (SVDSGSSVSVDDSSGVS). A compositionally biased stretch (basic and acidic residues) spans 571–593 (RTESGYDRSQDSQRKKVVGDTHR). Positions 645-658 (GITEVDTDSENETE) are enriched in acidic residues.

The protein belongs to the G-protein coupled receptor 1 family. Opsin subfamily. Expressed in Joseph cells and photoreceptor cells of the dorsal ocelli.

It localises to the cell membrane. Photoreceptor implicated in non-image-forming responses to light. Photoisomerizes covalently bound all-trans retinal back to 11-cis retinal. Most likely coupled to the G(q) signaling cascade. The polypeptide is Melanopsin (Branchiostoma belcheri (Amphioxus)).